We begin with the raw amino-acid sequence, 315 residues long: Ribosomal RNA small subunit methyltransferase H (315 aa).

Residues 35 to 37 (GGH), aspartate 55, phenylalanine 79, aspartate 101, and glutamine 108 contribute to the S-adenosyl-L-methionine site.

Belongs to the methyltransferase superfamily. RsmH family.

Its subcellular location is the cytoplasm. It catalyses the reaction cytidine(1402) in 16S rRNA + S-adenosyl-L-methionine = N(4)-methylcytidine(1402) in 16S rRNA + S-adenosyl-L-homocysteine + H(+). Functionally, specifically methylates the N4 position of cytidine in position 1402 (C1402) of 16S rRNA. The polypeptide is Ribosomal RNA small subunit methyltransferase H (Sodalis glossinidius (strain morsitans)).